The chain runs to 540 residues: T-complex protein 1 subunit theta (540 aa).

The protein belongs to the TCP-1 chaperonin family. Heterooligomeric complex of about 850 to 900 kDa that forms two stacked rings, 12 to 16 nm in diameter.

The protein localises to the cytoplasm. Functionally, molecular chaperone; assists the folding of proteins upon ATP hydrolysis. Known to play a role, in vitro, in the folding of actin and tubulin. In yeast may play a role in mitotic spindle formation. This is T-complex protein 1 subunit theta (CCT8) from Candida albicans (Yeast).